The following is a 752-amino-acid chain: Kaurene synthase like 2, chloroplastic (752 aa).

Residues 1–28 (MSLLLSNSALVGPKFRSSRISHASASLD) constitute a chloroplast transit peptide. Mg(2+) is bound by residues aspartate 538, aspartate 542, asparagine 682, and glutamate 690. A DDXXD motif motif is present at residues 538 to 542 (DDLFD).

The protein belongs to the terpene synthase family. Requires Mg(2+) as cofactor. Highly expressed in leaves.

Its subcellular location is the plastid. It is found in the chloroplast. It participates in secondary metabolite biosynthesis; terpenoid biosynthesis. Functionally, involved in the biosynthesis of ent-kaurene diterpenoids natural products such as oridonin, miltiradiene, eriocalyxin B and nezukol, known to exhibit antitumor, anti-inflammatory and antibacterial activities. Catalyzes the conversion of ent-copalyl diphosphate (ent-CPP) to ent-isopimaradiene like compounds. This is Kaurene synthase like 2, chloroplastic from Isodon rubescens (Rabdosia rubescens).